The following is a 249-amino-acid chain: SRR1-like protein (249 aa).

A disordered region spans residues 1–40; the sequence is MAAAALEPWSAVAPRRRKRAAGRRPRPGEGPRAEPEADGE. Positions 14–25 are enriched in basic residues; the sequence is PRRRKRAAGRRP. Residues 26 to 40 are compositionally biased toward basic and acidic residues; it reads RPGEGPRAEPEADGE.

The protein belongs to the SRR1 family.

Its subcellular location is the cytoplasm. In terms of biological role, plays a role in the regulation of heme biosynthesis and in the regulation of the expression of core clock genes. The protein is SRR1-like protein (Srrd) of Mus musculus (Mouse).